Reading from the N-terminus, the 364-residue chain is Lipoyl synthase, mitochondrial (364 aa).

Positions 34–53 are disordered; it reads PNFQDFIQNSDNSKDDFENY. Positions 99, 104, 110, 130, 134, 137, and 345 each coordinate [4Fe-4S] cluster. The region spanning 115–334 is the Radical SAM core domain; sequence EHGTQTATIM…EQRGNELGFL (220 aa).

The protein belongs to the radical SAM superfamily. Lipoyl synthase family. It depends on [4Fe-4S] cluster as a cofactor.

It is found in the mitochondrion. It carries out the reaction [[Fe-S] cluster scaffold protein carrying a second [4Fe-4S](2+) cluster] + N(6)-octanoyl-L-lysyl-[protein] + 2 oxidized [2Fe-2S]-[ferredoxin] + 2 S-adenosyl-L-methionine + 4 H(+) = [[Fe-S] cluster scaffold protein] + N(6)-[(R)-dihydrolipoyl]-L-lysyl-[protein] + 4 Fe(3+) + 2 hydrogen sulfide + 2 5'-deoxyadenosine + 2 L-methionine + 2 reduced [2Fe-2S]-[ferredoxin]. Its pathway is protein modification; protein lipoylation via endogenous pathway; protein N(6)-(lipoyl)lysine from octanoyl-[acyl-carrier-protein]: step 2/2. Catalyzes the radical-mediated insertion of two sulfur atoms into the C-6 and C-8 positions of the octanoyl moiety bound to the lipoyl domains of lipoate-dependent enzymes, thereby converting the octanoylated domains into lipoylated derivatives. This chain is Lipoyl synthase, mitochondrial, found in Drosophila grimshawi (Hawaiian fruit fly).